Here is a 260-residue protein sequence, read N- to C-terminus: Hydroxyethylthiazole kinase 1 (260 aa).

Residue Met-39 coordinates substrate. Residues Arg-115 and Thr-160 each contribute to the ATP site. Gly-187 contributes to the substrate binding site.

This sequence belongs to the Thz kinase family. The cofactor is Mg(2+).

The enzyme catalyses 5-(2-hydroxyethyl)-4-methylthiazole + ATP = 4-methyl-5-(2-phosphooxyethyl)-thiazole + ADP + H(+). It participates in cofactor biosynthesis; thiamine diphosphate biosynthesis; 4-methyl-5-(2-phosphoethyl)-thiazole from 5-(2-hydroxyethyl)-4-methylthiazole: step 1/1. In terms of biological role, catalyzes the phosphorylation of the hydroxyl group of 4-methyl-5-beta-hydroxyethylthiazole (THZ). The sequence is that of Hydroxyethylthiazole kinase 1 from Streptococcus pneumoniae (strain 70585).